The sequence spans 258 residues: Thyroxine 5-deiodinase (258 aa).

Residues 1-20 (AACILLFPRFLLTAVMLWLL) form a helical; Signal-anchor for type II membrane protein membrane-spanning segment. At 21 to 258 (DFLCIRKKML…QSPGAVVIQV (238 aa)) the chain is on the extracellular side. Sec122 is an active-site residue. Sec122 is a non-standard amino acid (selenocysteine).

Belongs to the iodothyronine deiodinase family. Monomer. Homodimer. May undergo minor heretodimerization with DIO1 and DIO2.

It is found in the cell membrane. It localises to the endosome membrane. The enzyme catalyses 3,3',5'-triiodo-L-thyronine + iodide + A + H(+) = L-thyroxine + AH2. The catalysed reaction is 3,3'-diiodo-L-thyronine + iodide + A + H(+) = 3,3',5-triiodo-L-thyronine + AH2. It carries out the reaction 3-iodo-L-thyronine + iodide + A + H(+) = 3,5-diiodo-L-thyronine + AH2. It catalyses the reaction L-thyronine + iodide + A + H(+) = 3-iodo-L-thyronine + AH2. The enzyme catalyses 3',5'-diiodo-L-thyronine + iodide + A + H(+) = 3,3',5'-triiodo-L-thyronine + AH2. The catalysed reaction is 3'-iodo-L-thyronine + iodide + A + H(+) = 3,3'-diiodo-L-thyronine + AH2. It carries out the reaction 3,3',5'-triiodothyronamine + iodide + A + H(+) = 3,3',5,5'-tetraiodothyronamine + AH2. It catalyses the reaction 3',5'-diiodothyronamine + iodide + A + H(+) = 3,3',5'-triiodothyronamine + AH2. The enzyme catalyses 3,3'-diiodothyronamine + iodide + A + H(+) = 3,3',5-triiodothyronamine + AH2. The catalysed reaction is 3-iodothyronamine + iodide + A + H(+) = 3,5-diiodothyronamine + AH2. It carries out the reaction 3'-iodothyronamine + iodide + A + H(+) = 3,3'-diiodothyronamine + AH2. It catalyses the reaction thyronamine + iodide + A + H(+) = 3-iodothyronamine + AH2. Plays a crucial role in the metabolism of thyroid hormones (TH) and has specific roles in TH activation and inactivation by deiodination. Catalyzes the deiodination of L-thyroxine (T4) to 3,3',5'-triiodothyronine (rT3) and 3,5,3'-triiodothyronine (T3) to 3,3'-diiodothyronine (3,3'-T2) via inner-ring deiodination (IRD). Catalyzes the deiodination of rT3 to 3',5'-diiodothyronine (3',5'-T2), 3,3'-T2 to 3'-monoiodothyronine (3'-T1) and 3,5-diiodothyronine (3,5-T2) to 3-monoiodothyronine (3-T1) via IRD. Catalyzes the deiodination of 3-T1 to L-thyronine (T0) via outer-ring deiodination (ORD). Catalyzes the tyrosyl ring deiodinations of 3,3',5,5'-tetraiodothyronamine, 3,3',5'-triiodothyronamine, 3,5,3'-triiodothyronamine, 3,5-diiodothyronamine, 3,3'-diiodothyronamine and 3-iodothyronamine. In Gallus gallus (Chicken), this protein is Thyroxine 5-deiodinase (DIO3).